We begin with the raw amino-acid sequence, 106 residues long: 3-phenylpropionate/cinnamic acid dioxygenase ferredoxin subunit (106 aa).

The Rieske domain occupies 4–99; it reads IYACPVADVP…VHVEGSDIFI (96 aa). [2Fe-2S] cluster is bound by residues Cys-42, His-44, Cys-62, and His-65.

This sequence belongs to the bacterial ring-hydroxylating dioxygenase ferredoxin component family. This dioxygenase system consists of four proteins: the two subunits of the hydroxylase component (HcaE and HcaF), a ferredoxin (HcaC) and a ferredoxin reductase (HcaD). The cofactor is [2Fe-2S] cluster.

It functions in the pathway aromatic compound metabolism; 3-phenylpropanoate degradation. Part of the multicomponent 3-phenylpropionate dioxygenase, that converts 3-phenylpropionic acid (PP) and cinnamic acid (CI) into 3-phenylpropionate-dihydrodiol (PP-dihydrodiol) and cinnamic acid-dihydrodiol (CI-dihydrodiol), respectively. This protein seems to be a 2Fe-2S ferredoxin. The chain is 3-phenylpropionate/cinnamic acid dioxygenase ferredoxin subunit from Shigella boydii serotype 4 (strain Sb227).